A 140-amino-acid polypeptide reads, in one-letter code: Large ribosomal subunit protein bL17 (140 aa).

It belongs to the bacterial ribosomal protein bL17 family. In terms of assembly, part of the 50S ribosomal subunit. Contacts protein L32.

The protein is Large ribosomal subunit protein bL17 of Methylobacterium nodulans (strain LMG 21967 / CNCM I-2342 / ORS 2060).